A 266-amino-acid polypeptide reads, in one-letter code: GTP cyclohydrolase FolE2 (266 aa).

Belongs to the GTP cyclohydrolase IV family.

The catalysed reaction is GTP + H2O = 7,8-dihydroneopterin 3'-triphosphate + formate + H(+). It functions in the pathway cofactor biosynthesis; 7,8-dihydroneopterin triphosphate biosynthesis; 7,8-dihydroneopterin triphosphate from GTP: step 1/1. In terms of biological role, converts GTP to 7,8-dihydroneopterin triphosphate. In Methylobacillus flagellatus (strain ATCC 51484 / DSM 6875 / VKM B-1610 / KT), this protein is GTP cyclohydrolase FolE2.